Reading from the N-terminus, the 333-residue chain is Serine proteinase inhibitor 2 (333 aa).

The protein belongs to the serpin family. Poxviruses subfamily.

Its subcellular location is the host cytoplasm. Functionally, weak inhibitor of the interleukin-1-beta converting enzyme (ICE) and of granzyme B. Does not form a stable complex with ICE, but can for a stable complex with granzyme B. This is Serine proteinase inhibitor 2 (SERP2) from Myxoma virus (strain Uriarra) (MYXV).